The primary structure comprises 631 residues: Phosphomethylpyrimidine synthase (631 aa).

Residues Asn239, Met268, Tyr297, His333, 353–355 (SRG), 394–397 (DGLR), and Glu433 contribute to the substrate site. His437 lines the Zn(2+) pocket. Tyr460 is a binding site for substrate. His501 contacts Zn(2+). The [4Fe-4S] cluster site is built by Cys581, Cys584, and Cys589.

The protein belongs to the ThiC family. Homodimer. The cofactor is [4Fe-4S] cluster.

The enzyme catalyses 5-amino-1-(5-phospho-beta-D-ribosyl)imidazole + S-adenosyl-L-methionine = 4-amino-2-methyl-5-(phosphooxymethyl)pyrimidine + CO + 5'-deoxyadenosine + formate + L-methionine + 3 H(+). Its pathway is cofactor biosynthesis; thiamine diphosphate biosynthesis. In terms of biological role, catalyzes the synthesis of the hydroxymethylpyrimidine phosphate (HMP-P) moiety of thiamine from aminoimidazole ribotide (AIR) in a radical S-adenosyl-L-methionine (SAM)-dependent reaction. The protein is Phosphomethylpyrimidine synthase of Escherichia coli O7:K1 (strain IAI39 / ExPEC).